The chain runs to 102 residues: Small ribosomal subunit protein uS10 (102 aa).

The protein belongs to the universal ribosomal protein uS10 family. As to quaternary structure, part of the 30S ribosomal subunit.

Functionally, involved in the binding of tRNA to the ribosomes. The sequence is that of Small ribosomal subunit protein uS10 from Streptococcus pyogenes serotype M12 (strain MGAS2096).